The primary structure comprises 306 residues: Mating type protein SmtA-1 (306 aa).

The segment at residues 49-104 (APKKKVNGFMGFRSYYSPLFSQFPQKARSPFMTILWQHDPFHNEWDFMCSVYSSIR) is a DNA-binding region (alpha box).

This sequence belongs to the MATALPHA1 family.

It localises to the nucleus. Functionally, mating type proteins are sequence specific DNA-binding proteins that act as master switches in fungal differentiation by controlling gene expression in a cell type-specific fashion. Transcriptional activator that induces the transcription of alpha-specific genes. The chain is Mating type protein SmtA-1 (SMTA1) from Sordaria macrospora (strain ATCC MYA-333 / DSM 997 / K(L3346) / K-hell).